The following is a 945-amino-acid chain: Oxysterol-binding protein homolog C23H4.01c (945 aa).

Residues 1 to 131 (METVEIRSKS…PKTVTFLLTA (131 aa)) form the GOLD domain. One can recognise a PH domain in the interval 149-243 (KQIISGTLLK…WCNALEKAKN (95 aa)). Phosphoserine is present on residues Ser-288, Ser-419, and Ser-421. 2 disordered regions span residues 396–555 (ESGA…LPHS) and 846–894 (LEKD…MEEK). The span at 443 to 454 (TSSISDTSSNSS) shows a compositional bias: low complexity. Positions 460–470 (LNATSLASTVD) are enriched in polar residues. A compositionally biased stretch (basic and acidic residues) spans 482 to 499 (ESNKENDIKRKQPFHDLM). The residue at position 503 (Ser-503) is a Phosphoserine.

It belongs to the OSBP family.

Its subcellular location is the cytoplasm. The polypeptide is Oxysterol-binding protein homolog C23H4.01c (Schizosaccharomyces pombe (strain 972 / ATCC 24843) (Fission yeast)).